We begin with the raw amino-acid sequence, 80 residues long: U-poneritoxin(01)-Om3a (80 aa).

The first 25 residues, 1–25 (MKPSGLALAFLVVFMMAIMYNSVQA), serve as a signal peptide directing secretion. Residues 26–39 (AAIADADAEAEAIA) constitute a propeptide that is removed on maturation.

Belongs to the formicidae venom precursor-01 superfamily. In terms of processing, truncated sequences of this peptide have also been found in the venom. It is possible they have been cleaved in the venom. Expressed by the venom gland.

It localises to the secreted. Functionally, cationic amphipathic alpha-helical peptide with antimicrobial activities against E.coli (MIC=3.1 uM), S.aureus (MIC=25 uM), and S.cerevisiae (MIC=50 uM). Also shows histamine-releasing activity (37.5% at 10 uM). Does not show hemolytic activity, even at 50 uM. The protein is U-poneritoxin(01)-Om3a of Odontomachus monticola (Trap-jaw ant).